Here is a 339-residue protein sequence, read N- to C-terminus: Dihydroorotate dehydrogenase (quinone) (339 aa).

FMN is bound by residues 62–66 (AGMDK) and Thr-86. Lys-66 lines the substrate pocket. Residue 111 to 115 (NRMGF) coordinates substrate. FMN-binding residues include Asn-139 and Asn-172. Asn-172 provides a ligand contact to substrate. Catalysis depends on Ser-175, which acts as the Nucleophile. Residue Asn-177 participates in substrate binding. The FMN site is built by Lys-217 and Thr-245. 246–247 (NT) is a substrate binding site. Residues Gly-268, Gly-297, and 318–319 (YS) contribute to the FMN site.

The protein belongs to the dihydroorotate dehydrogenase family. Type 2 subfamily. In terms of assembly, monomer. FMN is required as a cofactor.

It localises to the cell membrane. It catalyses the reaction (S)-dihydroorotate + a quinone = orotate + a quinol. It functions in the pathway pyrimidine metabolism; UMP biosynthesis via de novo pathway; orotate from (S)-dihydroorotate (quinone route): step 1/1. Catalyzes the conversion of dihydroorotate to orotate with quinone as electron acceptor. The protein is Dihydroorotate dehydrogenase (quinone) of Shewanella piezotolerans (strain WP3 / JCM 13877).